Here is a 570-residue protein sequence, read N- to C-terminus: Capsid vertex component 2 (570 aa).

An interaction with major capsid protein/MCP region spans residues 1–54; it reads MALSGHVLIDPARLPRDTGPELMWAPSLRNSLRVSPEALELAEREAERARSERW. The segment at 102–123 is disordered; that stretch reads QVRSPSTGGRSAPAPPSPSPAQ.

Belongs to the herpesviridae CVC2 protein family. Heterodimerizes with CVC1. Interacts with major capsid protein/MCP and triplex capsid protein 1/TRX1 at the pentamer vertices. Interacts with the large tegument protein/LTP.

Its subcellular location is the virion. The protein localises to the host nucleus. Its function is as follows. Capsid vertex-specific component that plays a role during viral DNA encapsidation, assuring correct genome cleavage and presumably stabilizing capsids that contain full-length viral genomes. Participates in the interaction between the capsid and the tegument through interaction with the large tegument protein/LTP. The polypeptide is Capsid vertex component 2 (Homo sapiens (Human)).